Reading from the N-terminus, the 616-residue chain is Dihydroxy-acid dehydratase (616 aa).

A Mg(2+)-binding site is contributed by Asp-81. Cys-122 lines the [2Fe-2S] cluster pocket. Positions 123 and 124 each coordinate Mg(2+). N6-carboxylysine is present on Lys-124. Cys-195 lines the [2Fe-2S] cluster pocket. Residue Glu-491 participates in Mg(2+) binding. Residue Ser-517 is the Proton acceptor of the active site.

The protein belongs to the IlvD/Edd family. In terms of assembly, homodimer. [2Fe-2S] cluster is required as a cofactor. It depends on Mg(2+) as a cofactor.

It catalyses the reaction (2R)-2,3-dihydroxy-3-methylbutanoate = 3-methyl-2-oxobutanoate + H2O. The catalysed reaction is (2R,3R)-2,3-dihydroxy-3-methylpentanoate = (S)-3-methyl-2-oxopentanoate + H2O. It functions in the pathway amino-acid biosynthesis; L-isoleucine biosynthesis; L-isoleucine from 2-oxobutanoate: step 3/4. It participates in amino-acid biosynthesis; L-valine biosynthesis; L-valine from pyruvate: step 3/4. In terms of biological role, functions in the biosynthesis of branched-chain amino acids. Catalyzes the dehydration of (2R,3R)-2,3-dihydroxy-3-methylpentanoate (2,3-dihydroxy-3-methylvalerate) into 2-oxo-3-methylpentanoate (2-oxo-3-methylvalerate) and of (2R)-2,3-dihydroxy-3-methylbutanoate (2,3-dihydroxyisovalerate) into 2-oxo-3-methylbutanoate (2-oxoisovalerate), the penultimate precursor to L-isoleucine and L-valine, respectively. This is Dihydroxy-acid dehydratase from Shigella sonnei (strain Ss046).